A 559-amino-acid chain; its full sequence is PHD finger protein 1 (559 aa).

The Tudor domain occupies 29-86 (PRLWEGQDVLARWTDGLLYLGTIKKVDSAREVCLVQFEDDSQFLVLWKDISPAALPGE). 2 consecutive PHD-type zinc fingers follow at residues 87–142 (ELLC…CVFA) and 186–240 (QSYC…CRGG). Disordered stretches follow at residues 338–434 (PVEL…TDAR) and 448–526 (HPSA…GGVS). The span at 369–386 (WRSEPEPLRRRQKGKVEE) shows a compositional bias: basic and acidic residues. 2 stretches are compositionally biased toward polar residues: residues 417–426 (NQSYEGSSGY) and 449–459 (PSASTAGTSGD). Over residues 481 to 515 (SSPHSVTASSSSVPALTPGFSRHSPPSPLCRSLSP) the composition is skewed to low complexity.

It belongs to the Polycomblike family. As to quaternary structure, associated component of the PRC2 complex. Interacts with p53/TP53. Interacts with CHMP1. Testis-specific.

It is found in the nucleus. Its subcellular location is the cytoplasm. The protein resides in the cytoskeleton. The protein localises to the microtubule organizing center. It localises to the centrosome. In terms of biological role, polycomb group (PcG) that specifically binds histone H3 trimethylated at 'Lys-36' (H3K36me3) and recruits the PRC2 complex. Involved in DNA damage response and is recruited at double-strand breaks (DSBs). Acts by binding to H3K36me3, a mark for transcriptional activation, and recruiting the PRC2 complex: it is however unclear whether recruitment of the PRC2 complex to H3K36me3 leads to enhance or inhibit H3K27me3 methylation mediated by the PRC2 complex. According to some reports, PRC2 recruitment by PHF1 promotes H3K27me3 and subsequent gene silencing by inducing spreading of PRC2 and H3K27me3 into H3K36me3 loci. According to other reports, PHF1 recruits the PRC2 complex at double-strand breaks (DSBs) and inhibits the activity of PRC2. Regulates p53/TP53 stability and prolonges its turnover: may act by specifically binding to a methylated from of p53/TP53. In Mus musculus (Mouse), this protein is PHD finger protein 1 (Phf1).